Consider the following 759-residue polypeptide: ARF GTPase-activating protein GIT2 (759 aa).

The Arf-GAP domain occupies 1 to 124 (MSKRLRSNDV…AFVHRLPCRD (124 aa)). The C4-type zinc finger occupies 11 to 34 (CADCSGPDPSWASVNRGTLICDEC). ANK repeat units follow at residues 132-161 (DLSK…QANF), 166-198 (KGST…THDS), and 199-228 (SGKT…ELTD). Disordered regions lie at residues 376–422 (VSNQ…DLSD) and 469–641 (QSEN…PSTE). Acidic residues predominate over residues 385–402 (QDNDQPDYDSVASDEDTD). Residues 451 to 478 (NNNLSGELRIMQKKLQTLQSENSSLRRQ) are a coiled coil. Over residues 469-489 (QSENSSLRRQATASACQVQTA) the composition is skewed to polar residues. Residues 555 to 569 (TSSSSLPSFPSTLSW) are compositionally biased toward low complexity. Positions 570-583 (SRDESTRRASRLEK) are enriched in basic and acidic residues.

In terms of assembly, may form heterooligomers with GIT1. Directly interacts with protein Piccolo/PCLO. Interacts with PPFIA1 and PPFIA2. Interacts with ARHGEF7. Identified in a complex with ARHGEF6 and BIN2. Interacts with PAK3. Interacts with PXN/paxillin. Interacts with TGFB1I1. Forms a complex with EFNB1 and GRB4/NCK2.

In terms of biological role, GTPase-activating protein for ADP ribosylation factor family members, including ARF1. This is ARF GTPase-activating protein GIT2 (Git2) from Rattus norvegicus (Rat).